The following is a 256-amino-acid chain: Flap endonuclease Xni (256 aa).

D105 is a Mg(2+) binding site. A 5'-3' exonuclease domain is found at 164-250 (SQFIDFLAMA…LNTRLANFRV (87 aa)). M172, A173, P181, I183, and I186 together coordinate K(+). The tract at residues 185 to 190 (GIGPKS) is interaction with DNA.

Belongs to the Xni family. The cofactor is Mg(2+). K(+) is required as a cofactor.

Its function is as follows. Has flap endonuclease activity. During DNA replication, flap endonucleases cleave the 5'-overhanging flap structure that is generated by displacement synthesis when DNA polymerase encounters the 5'-end of a downstream Okazaki fragment. In Shewanella loihica (strain ATCC BAA-1088 / PV-4), this protein is Flap endonuclease Xni.